The sequence spans 284 residues: Bifunctional protein FolD (284 aa).

NADP(+) is bound by residues 165–167 (GRG), Thr192, and Val233.

This sequence belongs to the tetrahydrofolate dehydrogenase/cyclohydrolase family. Homodimer.

The enzyme catalyses (6R)-5,10-methylene-5,6,7,8-tetrahydrofolate + NADP(+) = (6R)-5,10-methenyltetrahydrofolate + NADPH. It catalyses the reaction (6R)-5,10-methenyltetrahydrofolate + H2O = (6R)-10-formyltetrahydrofolate + H(+). Its pathway is one-carbon metabolism; tetrahydrofolate interconversion. Catalyzes the oxidation of 5,10-methylenetetrahydrofolate to 5,10-methenyltetrahydrofolate and then the hydrolysis of 5,10-methenyltetrahydrofolate to 10-formyltetrahydrofolate. This chain is Bifunctional protein FolD, found in Corynebacterium glutamicum (strain R).